Reading from the N-terminus, the 330-residue chain is G-protein coupled receptor 157 (330 aa).

Topologically, residues Met1–Arg15 are extracellular. A helical membrane pass occupies residues Ala16 to His36. Residues Ala37–Arg48 lie on the Cytoplasmic side of the membrane. The helical transmembrane segment at Leu49–Leu69 threads the bilayer. Residues Gln70–Thr87 lie on the Extracellular side of the membrane. A helical membrane pass occupies residues Phe88 to Ile108. At Val109–His119 the chain is on the cytoplasmic side. Residues Leu120–Val140 traverse the membrane as a helical segment. The Extracellular segment spans residues Ser141–Arg166. Residues Val167–Leu187 form a helical membrane-spanning segment. At Leu188–Lys227 the chain is on the cytoplasmic side. The helical transmembrane segment at Leu228–Leu248 threads the bilayer. Residues Thr249–Pro259 are Extracellular-facing. Residues Val260 to Phe280 traverse the membrane as a helical segment. Topologically, residues Val281–Thr330 are cytoplasmic. Residues Pro301–Thr330 are disordered. A compositionally biased stretch (basic and acidic residues) spans Glu317–Thr330.

This sequence belongs to the G-protein coupled receptor 2 family. Expressed in the primary cilia of radial glial progenitors (RGPs) in the developing neocortex.

The protein resides in the cell projection. It localises to the cilium membrane. Orphan receptor that promotes neuronal differentiation of radial glial progenitors (RGPs). The activity of this receptor is mediated by a G(q)-protein that activates a phosphatidylinositol-calcium second messenger. The polypeptide is G-protein coupled receptor 157 (Gpr157) (Mus musculus (Mouse)).